A 252-amino-acid polypeptide reads, in one-letter code: Mitochondrial peculiar membrane protein 1 (252 aa).

The segment at 230 to 252 (TTTTSKGSSPQVKHKVVSVDEDN) is disordered.

It is found in the mitochondrion membrane. The chain is Mitochondrial peculiar membrane protein 1 (MPM1) from Saccharomyces cerevisiae (strain ATCC 204508 / S288c) (Baker's yeast).